The following is an 86-amino-acid chain: Large ribosomal subunit protein uL24c (86 aa).

It belongs to the universal ribosomal protein uL24 family. As to quaternary structure, part of the 50S ribosomal subunit.

The protein localises to the plastid. The protein resides in the chloroplast. Functionally, one of two assembly initiator proteins, it binds directly to the 5'-end of the 23S rRNA, where it nucleates assembly of the 50S subunit. The protein is Large ribosomal subunit protein uL24c (rpl24) of Heterosigma akashiwo (strain NIES-293 / 8280G21-1).